Consider the following 179-residue polypeptide: Auxin-induced protein IAA6 (179 aa).

Positions 13–17 (LRLGL) match the EAR-like (transcriptional repression) motif. A disordered region spans residues 31–52 (FSEIDGGVEENGGSGDRKSVDK). The region spanning 75 to 163 (KMYMKVSMDG…KRLRIMKRSD (89 aa)) is the PB1 domain.

Belongs to the Aux/IAA family. In terms of assembly, homodimers and heterodimers.

The protein resides in the nucleus. Its function is as follows. Aux/IAA proteins are short-lived transcriptional factors that function as repressors of early auxin response genes at low auxin concentrations. Repression is thought to result from the interaction with auxin response factors (ARFs), proteins that bind to the auxin-responsive promoter element (AuxRE). Formation of heterodimers with ARF proteins may alter their ability to modulate early auxin response genes expression. This chain is Auxin-induced protein IAA6 (IAA6), found in Pisum sativum (Garden pea).